We begin with the raw amino-acid sequence, 1451 residues long: DNA polymerase III PolC-type (1451 aa).

Residues 416-575 (FVIFDIETTG…YDTEALKKVF (160 aa)) form the Exonuclease domain.

This sequence belongs to the DNA polymerase type-C family. PolC subfamily.

Its subcellular location is the cytoplasm. It carries out the reaction DNA(n) + a 2'-deoxyribonucleoside 5'-triphosphate = DNA(n+1) + diphosphate. Functionally, required for replicative DNA synthesis. This DNA polymerase also exhibits 3' to 5' exonuclease activity. The sequence is that of DNA polymerase III PolC-type from Mycoplasma genitalium (strain ATCC 33530 / DSM 19775 / NCTC 10195 / G37) (Mycoplasmoides genitalium).